Here is a 236-residue protein sequence, read N- to C-terminus: Leucyl/phenylalanyl-tRNA--protein transferase (236 aa).

Belongs to the L/F-transferase family.

It localises to the cytoplasm. It catalyses the reaction N-terminal L-lysyl-[protein] + L-leucyl-tRNA(Leu) = N-terminal L-leucyl-L-lysyl-[protein] + tRNA(Leu) + H(+). It carries out the reaction N-terminal L-arginyl-[protein] + L-leucyl-tRNA(Leu) = N-terminal L-leucyl-L-arginyl-[protein] + tRNA(Leu) + H(+). The catalysed reaction is L-phenylalanyl-tRNA(Phe) + an N-terminal L-alpha-aminoacyl-[protein] = an N-terminal L-phenylalanyl-L-alpha-aminoacyl-[protein] + tRNA(Phe). Functionally, functions in the N-end rule pathway of protein degradation where it conjugates Leu, Phe and, less efficiently, Met from aminoacyl-tRNAs to the N-termini of proteins containing an N-terminal arginine or lysine. In Shewanella sediminis (strain HAW-EB3), this protein is Leucyl/phenylalanyl-tRNA--protein transferase.